The primary structure comprises 275 residues: Orotidine 5'-phosphate decarboxylase (275 aa).

K95 (proton donor) is an active-site residue.

The protein belongs to the OMP decarboxylase family. Type 2 subfamily.

It carries out the reaction orotidine 5'-phosphate + H(+) = UMP + CO2. The protein operates within pyrimidine metabolism; UMP biosynthesis via de novo pathway; UMP from orotate: step 2/2. This is Orotidine 5'-phosphate decarboxylase from Delftia acidovorans (strain DSM 14801 / SPH-1).